The sequence spans 89 residues: Small ribosomal subunit protein uS15 (89 aa).

The tract at residues 1–25 (MSLDTTEKQQLINTHQTHGTDTGSA) is disordered. Over residues 8–25 (KQQLINTHQTHGTDTGSA) the composition is skewed to polar residues.

The protein belongs to the universal ribosomal protein uS15 family. Part of the 30S ribosomal subunit. Forms a bridge to the 50S subunit in the 70S ribosome, contacting the 23S rRNA.

One of the primary rRNA binding proteins, it binds directly to 16S rRNA where it helps nucleate assembly of the platform of the 30S subunit by binding and bridging several RNA helices of the 16S rRNA. Functionally, forms an intersubunit bridge (bridge B4) with the 23S rRNA of the 50S subunit in the ribosome. The protein is Small ribosomal subunit protein uS15 of Synechococcus sp. (strain CC9605).